We begin with the raw amino-acid sequence, 535 residues long: Bifunctional purine biosynthesis protein PurH (535 aa).

Positions 6-151 (TRLPIRRALI…KNHKDVAIVV (146 aa)) constitute an MGS-like domain.

It belongs to the PurH family.

It carries out the reaction (6R)-10-formyltetrahydrofolate + 5-amino-1-(5-phospho-beta-D-ribosyl)imidazole-4-carboxamide = 5-formamido-1-(5-phospho-D-ribosyl)imidazole-4-carboxamide + (6S)-5,6,7,8-tetrahydrofolate. The catalysed reaction is IMP + H2O = 5-formamido-1-(5-phospho-D-ribosyl)imidazole-4-carboxamide. The protein operates within purine metabolism; IMP biosynthesis via de novo pathway; 5-formamido-1-(5-phospho-D-ribosyl)imidazole-4-carboxamide from 5-amino-1-(5-phospho-D-ribosyl)imidazole-4-carboxamide (10-formyl THF route): step 1/1. It participates in purine metabolism; IMP biosynthesis via de novo pathway; IMP from 5-formamido-1-(5-phospho-D-ribosyl)imidazole-4-carboxamide: step 1/1. The sequence is that of Bifunctional purine biosynthesis protein PurH from Pseudomonas entomophila (strain L48).